The chain runs to 147 residues: MSIRLENLSYTPGARKEKHRKGRGHAAGKGKQAGRGQSGQKKRSTVRLGFEGGQNPWFRRVPKRGFRNFNKKEYEIFNISDLESRYQDGDTVSLESLYLKKVLKKRNMKAKLLANGDLTKKLTVTTNAFSIAAQKKIEEKGGKIEVR.

The tract at residues 1-46 (MSIRLENLSYTPGARKEKHRKGRGHAAGKGKQAGRGQSGQKKRSTV) is disordered. Positions 16 to 28 (KEKHRKGRGHAAG) are enriched in basic residues.

The protein belongs to the universal ribosomal protein uL15 family. In terms of assembly, part of the 50S ribosomal subunit.

Binds to the 23S rRNA. The chain is Large ribosomal subunit protein uL15 from Mesomycoplasma hyopneumoniae (strain J / ATCC 25934 / NCTC 10110) (Mycoplasma hyopneumoniae).